Consider the following 598-residue polypeptide: DNA ligase (598 aa).

ATP is bound at residue aspartate 258. Lysine 260 (N6-AMP-lysine intermediate) is an active-site residue. Arginine 265, arginine 280, glutamate 310, phenylalanine 350, arginine 427, and lysine 433 together coordinate ATP.

Belongs to the ATP-dependent DNA ligase family. Mg(2+) serves as cofactor.

It catalyses the reaction ATP + (deoxyribonucleotide)n-3'-hydroxyl + 5'-phospho-(deoxyribonucleotide)m = (deoxyribonucleotide)n+m + AMP + diphosphate.. DNA ligase that seals nicks in double-stranded DNA during DNA replication, DNA recombination and DNA repair. The polypeptide is DNA ligase (Sulfolobus acidocaldarius (strain ATCC 33909 / DSM 639 / JCM 8929 / NBRC 15157 / NCIMB 11770)).